Consider the following 119-residue polypeptide: Putative F420H(2)-dependent quinone reductase Rv3178 (119 aa).

Coenzyme F420-(gamma-Glu)n contacts are provided by residues 21-23 (RKS), 27-32 (FVAPLL), 43-46 (VASA), and 54-58 (QWYRN).

This sequence belongs to the F420H(2)-dependent quinone reductase family.

Its subcellular location is the cell membrane. The enzyme catalyses oxidized coenzyme F420-(gamma-L-Glu)(n) + a quinol + H(+) = reduced coenzyme F420-(gamma-L-Glu)(n) + a quinone. Its function is as follows. Involved in a F420-dependent anti-oxidant mechanism that protects M.tuberculosis against oxidative stress and bactericidal agents. Catalyzes the F420H(2)-dependent two-electron reduction of quinones to dihydroquinones, thereby preventing the formation of cytotoxic semiquinones obtained by the one-electron reduction pathway. Since menaquinone is the sole quinone electron carrier in the respiratory chain in M.tuberculosis, the physiological electron acceptor for Fqr-mediated F420H(2) oxidation is therefore likely to be the endogenous menaquinone found in the membrane fraction of M.tuberculosis. In Mycobacterium tuberculosis (strain ATCC 25618 / H37Rv), this protein is Putative F420H(2)-dependent quinone reductase Rv3178.